Reading from the N-terminus, the 379-residue chain is D-threonine aldolase (379 aa).

Lysine 59 is modified (N6-(pyridoxal phosphate)lysine).

The protein belongs to the DSD1 family. The cofactor is pyridoxal 5'-phosphate. Requires Mn(2+) as cofactor. Co(2+) is required as a cofactor. It depends on Ni(2+) as a cofactor. Mg(2+) serves as cofactor.

It catalyses the reaction D-threonine = acetaldehyde + glycine. The catalysed reaction is D-allo-threonine = acetaldehyde + glycine. Its activity is regulated as follows. Inhibited by the carbonyl reagents hydroxylamine, phenylhydrazine and semicarbazide. Inhibited by the chelating agent EDTA. Inhibited by the sulfhydryl reagent p-chloromercuribenzoic acid, and by sodium cyanide. Inhibited by iodoacetate, Ag(2)SO(4), HgCl(2) and CdCl(2). Competitively inhibited by beta-hydroxyaspartate and O-phospho-DL-threonine. Catalyzes the reversible cleavage of D-threonine or D-allothreonine into glycine and acetaldehyde. Can also cleave D-beta-phenylserine, D-beta-hydroxy-alpha-aminovaleric acid, D-beta-3,4-dihydroxyphenylserine and D-beta-3,4-methylenedioxyphenylserine into glycine and the corresponding aldehyde compounds. Inactive towards D-serine, beta-hydroxyaspartate and O-phospho-DL-threonine. The polypeptide is D-threonine aldolase (Arthrobacter sp).